Here is a 533-residue protein sequence, read N- to C-terminus: Phospho-2-dehydro-3-deoxyheptonate aldolase 1, chloroplastic (533 aa).

The transit peptide at 1 to 57 directs the protein to the chloroplast; it reads MALSTNSTTSSLLPKTPLVQQPLLKNASLPTTTKAIRFIQPISAIHSSDSSKNTPIV. Polar residues predominate over residues 47 to 56; sequence SSDSSKNTPI. Positions 47–70 are disordered; the sequence is SSDSSKNTPIVSAKPSSPPAATST. The segment covering 57 to 70 has biased composition (low complexity); sequence VSAKPSSPPAATST. Cys-145 provides a ligand contact to Mn(2+). Residues Arg-184, 343–344, Lys-366, and Arg-397 each bind substrate; that span reads ER. The Mn(2+) site is built by His-429, Glu-471, and Asp-501.

The protein belongs to the class-II DAHP synthase family. As to quaternary structure, homodimer. Mn(2+) serves as cofactor. As to expression, mostly expressed in flowers, especially in petal limbs and tubes, and, to a lower extent, in roots, stems, stigmas, anthers, leaves and sepals.

It localises to the plastid. The protein localises to the chloroplast. It catalyses the reaction D-erythrose 4-phosphate + phosphoenolpyruvate + H2O = 7-phospho-2-dehydro-3-deoxy-D-arabino-heptonate + phosphate. It participates in metabolic intermediate biosynthesis; chorismate biosynthesis; chorismate from D-erythrose 4-phosphate and phosphoenolpyruvate: step 1/7. In terms of biological role, involved in the production of volatile organic compounds (VOCs), including floral volatile benzenoids and phenylpropanoids (FVBP), in flowers of fragrant cultivars (e.g. cv. Mitchell and cv. V26), scent attracting pollinators (e.g. the night-active hawkmoth pollinator Manduca sexta). Catalyzes an aldol-like condensation reaction between phosphoenolpyruvate (PEP) and D-erythrose 4-phosphate (E4P) to generate 3-deoxy-D-arabino-heptulosonate 7-phosphate (DAH7P) and inorganic phosphate. The polypeptide is Phospho-2-dehydro-3-deoxyheptonate aldolase 1, chloroplastic (Petunia hybrida (Petunia)).